Reading from the N-terminus, the 469-residue chain is ATP-dependent protease ATPase subunit HslU (469 aa).

Residues isoleucine 21, 63-68 (GVGKTE), aspartate 282, glutamate 347, and arginine 419 contribute to the ATP site.

It belongs to the ClpX chaperone family. HslU subfamily. As to quaternary structure, a double ring-shaped homohexamer of HslV is capped on each side by a ring-shaped HslU homohexamer. The assembly of the HslU/HslV complex is dependent on binding of ATP.

Its subcellular location is the cytoplasm. Functionally, ATPase subunit of a proteasome-like degradation complex; this subunit has chaperone activity. The binding of ATP and its subsequent hydrolysis by HslU are essential for unfolding of protein substrates subsequently hydrolyzed by HslV. HslU recognizes the N-terminal part of its protein substrates and unfolds these before they are guided to HslV for hydrolysis. The protein is ATP-dependent protease ATPase subunit HslU of Petrotoga mobilis (strain DSM 10674 / SJ95).